The primary structure comprises 917 residues: von Willebrand factor A domain-containing protein DDB_G0285975 (917 aa).

Residues 12-51 (DTTTTTTPTTPTTPTTPTTTPTTTTTPTTTPTTTTTSTTP) are disordered. A compositionally biased stretch (low complexity) spans 13–51 (TTTTTTPTTPTTPTTPTTTPTTTTTPTTTPTTTTTSTTP). The region spanning 87–215 (RYNTGLKNIS…NVTIHLTIIS (129 aa)) is the VIT domain. The 169-residue stretch at 339–507 (EFIFLIDCSG…NFEEQVMKLV (169 aa)) folds into the VWFA domain. One can recognise a t-SNARE coiled-coil homology domain in the interval 679 to 741 (LFSSENRNQT…INSIPQKSNI (63 aa)). Composition is skewed to low complexity over residues 751–760 (SPSEVSTSKS) and 774–818 (NNNN…NNNN). The segment at 751-822 (SPSEVSTSKS…NNNNNNSDNS (72 aa)) is disordered.

The protein is von Willebrand factor A domain-containing protein DDB_G0285975 of Dictyostelium discoideum (Social amoeba).